Consider the following 3969-residue polypeptide: Histone-lysine N-methyltransferase 2A (3969 aa).

Disordered stretches follow at residues 1-108, 132-253, and 301-352; these read MAHS…LLRV, VFGE…EDSL, and RRRG…RQSP. The Menin-binding motif (MBM) motif lies at 6–25; the sequence is RWRFPARPGTTGGGGGGGRR. Residues 15 to 29 are compositionally biased toward gly residues; that stretch reads TTGGGGGGGRRGLGG. Low complexity-rich tracts occupy residues 59–69 and 77–104; these read AVAAAAAAAGS and GAAAASAASSSSASSSSSSSSSASSGPA. Positions 123 to 134 match the Integrase domain-binding motif 1 (IBM1) motif; the sequence is GTNLRRFRAVFG. A phosphoserine; by CK2 mark is found at serine 136 and serine 142. The Integrase domain-binding motif 2 (IBM2) motif lies at 147–152; it reads QFLGFG. Serine 153 carries the post-translational modification Phosphoserine. A DNA-binding region (a.T hook 1) is located at residues 169-180; sequence KTSPRKPRGRPR. At serine 197 the chain carries Phosphoserine. Composition is skewed to basic and acidic residues over residues 202–220 and 237–253; these read SETKSGDKIKKKDSKSIEK and HGKDISELPKGNKEDSL. Positions 217 to 227 form a DNA-binding region, a.T hook 2; that stretch reads SIEKKRGRPPT. Lysine 239 is modified (N6-acetyllysine). A DNA-binding region (a.T hook 3) is located at residues 301 to 309; it reads RRRGRPPST. The span at 323 to 347 shows a compositional bias: basic and acidic residues; the sequence is ELEKPQKVRKDKEGTPPLTKEDKTV. Lysine 373 carries the N6-acetyllysine modification. Positions 445–585 are disordered; that stretch reads STPNSRFSAP…SSISDHTPWL (141 aa). The span at 452 to 491 shows a compositional bias: low complexity; sequence SAPSCGSSEKSSAASQHSSQMSSDSSRSSSPSVDTSTDSQ. At serine 518 the chain carries Phosphoserine. The span at 546 to 559 shows a compositional bias: low complexity; the sequence is LSTLQSAPQQQTSS. Positions 560–573 are enriched in pro residues; it reads SPPPPLLTPPPPLQ. Lysine 636 carries the N6-acetyllysine modification. Residue serine 680 is modified to Phosphoserine. 4 disordered regions span residues 713–780, 798–949, 1038–1066, and 1106–1166; these read ESVT…SSSL, FPSH…TSVT, EKSKSLKQTDQPKAQGQESDSSETSVRGP, and SSMG…VPED. A compositionally biased stretch (polar residues) spans 716 to 732; the sequence is TLPSNRTSAGTSSSGVS. The span at 762–780 shows a compositional bias: low complexity; it reads LSSSELSPLTPPSSVSSSL. Residues 798 to 808 are compositionally biased toward polar residues; it reads FPSHSLTQSGE. Positions 820–841 are enriched in low complexity; it reads TSAPAEPFSSSSPTPLFPWFTP. Position 840 is a phosphothreonine (threonine 840). The segment covering 846-890 has biased composition (basic and acidic residues); sequence ERGRNKDKAPEELSKDRDADKSVEKDKSRERDREREKENKRESRK. Phosphoserine is present on residues serine 926 and serine 1056. A compositionally biased stretch (polar residues) spans 1043-1062; the sequence is LKQTDQPKAQGQESDSSETS. Lysine 1130 is modified (N6-acetyllysine). A CXXC-type zinc finger spans residues 1147–1195; the sequence is KKGRRSRRCGQCPGCQVPEDCGVCTNCLDKPKFGGRNIKKQCCKMRKCQ. Cysteine 1155, cysteine 1158, cysteine 1161, cysteine 1167, cysteine 1170, cysteine 1173, cysteine 1189, and cysteine 1194 together coordinate Zn(2+). Residues 1200-1375 form a disordered region; sequence MPSKAYLQKQ…PPVNKQENAG (176 aa). The span at 1220 to 1232 shows a compositional bias: basic and acidic residues; the sequence is SKTSEKKDSKESS. Over residues 1233–1243 the composition is skewed to low complexity; the sequence is VVKNVVDSSQK. At lysine 1235 the chain carries N6-acetyllysine. Residues 1248-1273 show a composition bias toward basic and acidic residues; sequence AREDPAPKKSSSEPPPRKPVEEKSEE. Residues 1284 to 1300 are compositionally biased toward polar residues; that stretch reads KQATTPASRKSSKQVSQ. Residues 1304-1313 are compositionally biased toward pro residues; that stretch reads VIPPQPPTTG. 3 consecutive PHD-type zinc fingers follow at residues 1431–1482, 1479–1533, and 1566–1627; these read RVVC…CKFC, CKFC…CVRC, and GNFC…CTER. The segment at 1584–1600 is interaction with histone H3K4me3; sequence KMMQCGKCDRWVHSKCE. The region spanning 1635-1765 is the Bromo domain; that stretch reads ALEKELQISL…SFFIRQMERV (131 aa). Disordered stretches follow at residues 1663–1713 and 1806–1869; these read YRQA…GVKR and QERE…GIED. Pro residues predominate over residues 1826–1847; the sequence is APKPKGPGEPDSPTPLHPPTPP. Phosphoserine is present on serine 1837. Threonine 1845 carries the phosphothreonine modification. Serine 1858 carries the phosphoserine modification. A C2HC pre-PHD-type zinc finger spans residues 1870-1910; the sequence is NRQCALCLTYGDDSANDAGRLLYIGQNEWTHVNCALWSAEV. Residues 1931 to 1978 form a PHD-type 4 zinc finger; that stretch reads LRCEFCQKPGATVGCCLTSCTSNYHFMCSRAKNCVFLDDKKVYCQRHR. Residues 2018–2074 form the FYR N-terminal domain; the sequence is NIHMMIGSMTIDCLGILNDLSDCEDKLFPIGYQCSRVYWSTTDARKRCVYTCKIVEC. 7 disordered regions span residues 2081–2133, 2145–2232, 2275–2333, 2373–2460, 2475–2618, 2647–2675, and 2713–2821; these read PDIN…TSGS, IRTP…TTGT, NKNS…KLAP, RGQR…EGNL, GQRP…RYPR, FYSSSTGKKRGKRSAEGQVDGADDLSTSD, and KISQ…KNLL. Positions 2095 to 2115 are enriched in polar residues; it reads IAHSPTSFTESSSKESQNTAE. Phosphoserine is present on serine 2098. Threonine 2147 bears the Phosphothreonine mark. Serine 2151 and serine 2201 each carry phosphoserine. Polar residues predominate over residues 2214–2232; it reads RTGNTYSRNNVSSVSTTGT. Positions 2283-2302 are enriched in low complexity; it reads SSSSEMKQSSASDLVSKSSS. Composition is skewed to polar residues over residues 2310-2319 and 2406-2421; these read VLSSKSSEGS and GMSNRSSIINEHMGSS. Basic and acidic residues predominate over residues 2432–2442; the sequence is SCKETFKEKHS. The residue at position 2525 (threonine 2525) is a Phosphothreonine. Residue lysine 2528 forms a Glycyl lysine isopeptide (Lys-Gly) (interchain with G-Cter in SUMO2) linkage. Polar residues-rich tracts occupy residues 2543–2563 and 2573–2592; these read SPASPLQIESTSPTEPISASE and PSPNNTSCQDSQSNNYQNLP. At serine 2611 the chain carries Phosphoserine. The segment covering 2726-2741 has biased composition (polar residues); the sequence is SDTSVTATTRKSSQIP. Over residues 2744-2782 the composition is skewed to basic and acidic residues; it reads NGKENGTENLKIDRPEDAGEKEHVTKSSVGHKNEPKMDN. Positions 2784–2795 are enriched in polar residues; sequence HSVSRVKTQGQD. Serine 2796 carries the post-translational modification Phosphoserine. A compositionally biased stretch (low complexity) spans 2796 to 2805; sequence SLEAQLSSLE. A compositionally biased stretch (polar residues) spans 2812–2821; that stretch reads TSTPSDKNLL. A 9aaTAD motif is present at residues 2847–2855; sequence SDIMDFVLK. Serine 2955 is subject to Phosphoserine. The residue at position 2958 (lysine 2958) is an N6-acetyllysine. 2 disordered regions span residues 2961-3064 and 3166-3244; these read TITE…NAAV and PAAT…SNIA. Composition is skewed to polar residues over residues 2963-2972 and 3016-3030; these read TEKSVASSES and HGNNQDLTRNSSTPG. Residue serine 3036 is modified to Phosphoserine. Residues 3039 to 3064 show a composition bias toward polar residues; that stretch reads VPIQNQKYVPNSTDSPGPSQISNAAV. Over residues 3171–3182 the composition is skewed to low complexity; it reads SSFPPNISNPPS. Residues 3198-3216 show a composition bias toward polar residues; it reads VSESSQRTDLSTTVATPSS. Positions 3218–3233 are enriched in basic residues; sequence LKKRPISRLQTRKNKK. Threonine 3372 is subject to Phosphothreonine. Lysine 3462 bears the N6-acetyllysine mark. Disordered regions lie at residues 3464–3608 and 3620–3643; these read GIHS…GQPA and TQNPANEQESAEPKTVEEEESNFS. A compositionally biased stretch (polar residues) spans 3476-3489; that stretch reads SGPQVSNFTQTVDA. The segment covering 3508 to 3529 has biased composition (low complexity); that stretch reads SPTSPGGSPSSPSSGQRSASPS. 3 positions are modified to phosphoserine: serine 3511, serine 3515, and serine 3527. The segment covering 3591 to 3603 has biased composition (polar residues); that stretch reads QDTASVEQSSQKE. Positions 3666-3747 constitute an FYR C-terminal domain; it reads KKGLVFEISS…KHCRNYKFRF (82 aa). The WDR5 interaction motif (WIN) signature appears at 3762–3767; that stretch reads GSARAE. Residues 3785-3808 are disordered; it reads HRQPPEYNPNDEEEEEVQLKSARR. Positions 3829 to 3945 constitute an SET domain; the sequence is EAVGVYRSPI…RGEELTYDYK (117 aa). The S-adenosyl-L-methionine site is built by histidine 3839 and arginine 3841. An S-methylcysteine; by autocatalysis modification is found at cysteine 3882. Residues tyrosine 3883 and 3906 to 3907 contribute to the S-adenosyl-L-methionine site; that span reads NH. Residues cysteine 3909 and cysteine 3957 each contribute to the Zn(2+) site. The Post-SET domain occupies 3953–3969; that stretch reads NKLPCNCGAKKCRKFLN. Residue asparagine 3958 participates in S-adenosyl-L-methionine binding. Zn(2+) is bound by residues cysteine 3959 and cysteine 3964.

The protein belongs to the class V-like SAM-binding methyltransferase superfamily. Histone-lysine methyltransferase family. TRX/MLL subfamily. MLL cleavage product N320 heterodimerizes with MLL cleavage product C180 (via SET and FYRC domains). Component of some MLL1/MLL complex, at least composed of the core components KMT2A/MLL1, ASH2L, HCFC1/HCF1, HCFC2, WDR5, DPY30 and RBBP5, as well as the facultative components BACC1, CHD8, E2F6, HSP70, INO80C, KANSL1, LAS1L, MAX, MCRS1, MEN1, MGA, KAT8/MOF, PELP1, PHF20, PRP31, RING2, RUVB1/TIP49A, RUVB2/TIP49B, SENP3, TAF1, TAF4, TAF6, TAF7, TAF9 and TEX10. Forms a core complex with the evolutionary conserved subcomplex WRAD composed of WDR5, RBBP5, ASH2L/ASH2 and DPY30 subunits; WRAD differentially stimulates the methyltransferase activity. Interacts (via WIN motif) with WDR5; the interaction is direct. Interaction with WDR5 is required for stable interaction with ASH2L and RBBP5, and thereby also for optimal histone methyltransferase activity. Interacts with KAT8/MOF; the interaction is direct. Interacts with SBF1 and PPP1R15A. Interacts with ZNF335. Interacts with CLOCK and BMAL1 in a circadian manner. Interacts with PPIE; this results in decreased histone H3 methyltransferase activity. Interacts with CREBBP. Interacts with the WRAD complex composed of WDR5, RBBP5, ASH2L and DPY30. Interacts (via MBM motif) with MEN1. Interacts (via IBM motifs) with PSIP1 (via IBD domain) with moderate affinity whereas the KMT2A-MEN1 complex interacts with a greater affinity; MEN1 enhances interaction of KMT2A with PSIP1. Phosphorylation increases its affinity for PSIP1. Forms a complex with CREBBP and CREB1. In terms of assembly, (Microbial infection) Interacts with herpes virus 8/HHV-8 protein LANA1; this interaction regulates the MLL1 histone methyltransferase activity on viral DNA. Post-translationally, proteolytic cleavage by TASP1 generates MLL cleavage product N320 and MLL cleavage product C180, which reassemble through a non-covalent association. 2 cleavage sites exist, cleavage site 1 (CS1) and cleavage site 2 (CS2), to generate MLL cleavage products N320 and C180. CS2 is the major site. Phosphorylation increases its interaction with PSIP1. In terms of processing, auto-methylated at Cys-3882: auto-methylation is inhibited by the WRAD complex and unmodified histone H3. In terms of tissue distribution, heart, lung, brain and T- and B-lymphocytes.

Its subcellular location is the nucleus. The enzyme catalyses L-lysyl(4)-[histone H3] + S-adenosyl-L-methionine = N(6)-methyl-L-lysyl(4)-[histone H3] + S-adenosyl-L-homocysteine + H(+). It carries out the reaction N(6)-methyl-L-lysyl(4)-[histone H3] + S-adenosyl-L-methionine = N(6),N(6)-dimethyl-L-lysyl(4)-[histone H3] + S-adenosyl-L-homocysteine + H(+). It catalyses the reaction L-cysteinyl-[protein] + S-adenosyl-L-methionine = S-methyl-L-cysteinyl-[protein] + S-adenosyl-L-homocysteine + H(+). In terms of biological role, histone methyltransferase that plays an essential role in early development and hematopoiesis. Catalytic subunit of the MLL1/MLL complex, a multiprotein complex that mediates both methylation of 'Lys-4' of histone H3 (H3K4me) complex and acetylation of 'Lys-16' of histone H4 (H4K16ac). Catalyzes methyl group transfer from S-adenosyl-L-methionine to the epsilon-amino group of 'Lys-4' of histone H3 (H3K4) via a non-processive mechanism. Part of chromatin remodeling machinery predominantly forms H3K4me1 and H3K4me2 methylation marks at active chromatin sites where transcription and DNA repair take place. Has weak methyltransferase activity by itself, and requires other component of the MLL1/MLL complex to obtain full methyltransferase activity. Has no activity toward histone H3 phosphorylated on 'Thr-3', less activity toward H3 dimethylated on 'Arg-8' or 'Lys-9', while it has higher activity toward H3 acetylated on 'Lys-9'. Binds to unmethylated CpG elements in the promoter of target genes and helps maintain them in the nonmethylated state. Required for transcriptional activation of HOXA9. Promotes PPP1R15A-induced apoptosis. Plays a critical role in the control of circadian gene expression and is essential for the transcriptional activation mediated by the CLOCK-BMAL1 heterodimer. Establishes a permissive chromatin state for circadian transcription by mediating a rhythmic methylation of 'Lys-4' of histone H3 (H3K4me) and this histone modification directs the circadian acetylation at H3K9 and H3K14 allowing the recruitment of CLOCK-BMAL1 to chromatin. Also has auto-methylation activity on Cys-3882 in absence of histone H3 substrate. The sequence is that of Histone-lysine N-methyltransferase 2A (KMT2A) from Homo sapiens (Human).